A 166-amino-acid chain; its full sequence is Co-chaperone protein HscB homolog (166 aa).

Residues Gln-3 to Thr-75 enclose the J domain.

Belongs to the HscB family. In terms of assembly, interacts with HscA and stimulates its ATPase activity.

Its function is as follows. Co-chaperone involved in the maturation of iron-sulfur cluster-containing proteins. Seems to help targeting proteins to be folded toward HscA. In Neisseria meningitidis serogroup C (strain 053442), this protein is Co-chaperone protein HscB homolog.